Reading from the N-terminus, the 220-residue chain is Kinetochore protein Spc25 (220 aa).

Residues 79-114 (HLTQEVEAIKLRNLAMKDQIKQQKMLNNQRKNEIME) are a coiled coil.

This sequence belongs to the SPC25 family. In terms of assembly, component of the Ndc80 complex, which is composed of Ndc80, Nuf2 and Spc25.

The protein localises to the nucleus. It is found in the chromosome. Its subcellular location is the centromere. It localises to the kinetochore. Acts as a component of the essential kinetochore-associated Ndc80 complex, which is required for chromosome segregation and spindle checkpoint activity during meiosis and mitosis. Required for kinetochore integrity and the organization of stable microtubule binding sites in the outer plate of the kinetochore. Participates in SAC signaling that responds specifically to disruptions in spindle microtubule dynamics. The NDC80 complex synergistically enhances the affinity of the SKA1 complex for microtubules and may allow the NDC80 complex to track depolymerizing microtubules. The sequence is that of Kinetochore protein Spc25 from Drosophila orena (Fruit fly).